Consider the following 403-residue polypeptide: Phosphopentomutase (403 aa).

Mn(2+) is bound by residues Asp13, Asp298, His303, Asp339, His340, and His351.

The protein belongs to the phosphopentomutase family. Mn(2+) serves as cofactor.

Its subcellular location is the cytoplasm. It catalyses the reaction 2-deoxy-alpha-D-ribose 1-phosphate = 2-deoxy-D-ribose 5-phosphate. The catalysed reaction is alpha-D-ribose 1-phosphate = D-ribose 5-phosphate. Its pathway is carbohydrate degradation; 2-deoxy-D-ribose 1-phosphate degradation; D-glyceraldehyde 3-phosphate and acetaldehyde from 2-deoxy-alpha-D-ribose 1-phosphate: step 1/2. In terms of biological role, isomerase that catalyzes the conversion of deoxy-ribose 1-phosphate (dRib-1-P) and ribose 1-phosphate (Rib-1-P) to deoxy-ribose 5-phosphate (dRib-5-P) and ribose 5-phosphate (Rib-5-P), respectively. The polypeptide is Phosphopentomutase (Streptococcus pyogenes serotype M3 (strain ATCC BAA-595 / MGAS315)).